The chain runs to 390 residues: ATP phosphoribosyltransferase regulatory subunit (390 aa).

The protein belongs to the class-II aminoacyl-tRNA synthetase family. HisZ subfamily. Heteromultimer composed of HisG and HisZ subunits.

Its subcellular location is the cytoplasm. Its pathway is amino-acid biosynthesis; L-histidine biosynthesis; L-histidine from 5-phospho-alpha-D-ribose 1-diphosphate: step 1/9. Its function is as follows. Required for the first step of histidine biosynthesis. May allow the feedback regulation of ATP phosphoribosyltransferase activity by histidine. In Bacillus velezensis (strain DSM 23117 / BGSC 10A6 / LMG 26770 / FZB42) (Bacillus amyloliquefaciens subsp. plantarum), this protein is ATP phosphoribosyltransferase regulatory subunit.